Reading from the N-terminus, the 559-residue chain is Formate--tetrahydrofolate ligase (559 aa).

Residue Thr68–Thr75 participates in ATP binding.

It belongs to the formate--tetrahydrofolate ligase family.

It carries out the reaction (6S)-5,6,7,8-tetrahydrofolate + formate + ATP = (6R)-10-formyltetrahydrofolate + ADP + phosphate. Its pathway is one-carbon metabolism; tetrahydrofolate interconversion. This chain is Formate--tetrahydrofolate ligase, found in Sinorhizobium fredii (strain NBRC 101917 / NGR234).